The primary structure comprises 798 residues: Palmitoyl thioesterase CPT1C (798 aa).

Over 1-52 (MAEAHQASSLLSSLSSDGAEVELSSPVWQEIYLCALRSWKRHLWRVWNDFLA) the chain is Cytoplasmic. The chain crosses the membrane as a helical span at residues 53-75 (GVVPATPLSWLFLFSTIQLACLL). Topologically, residues 76 to 103 (QLDPSLGLMEKIKELLPDWGGQHHQLQG) are lumenal. Residues 104–126 (FLSAAVFASCLWGALIFTLHVAL) form a helical membrane-spanning segment. Residues 127 to 798 (RLLLSHHGWL…PNTPTSSTNL (672 aa)) lie on the Cytoplasmic side of the membrane. The Proton acceptor role is filled by H469. 551 to 563 (GKSFIKCCHVSSD) provides a ligand contact to CoA. Residues Y585, S587, and T598 each contribute to the (R)-carnitine site. The interval 759–798 (LFRVGQHFKRQFRGENSDYRYNFLSCKTVDPNTPTSSTNL) is required for interaction with GRIA1.

Belongs to the carnitine/choline acetyltransferase family. As to quaternary structure, peripherally associated with AMPAR complex. AMPAR complex consists of an inner core made of 4 pore-forming GluA/GRIA proteins (GRIA1, GRIA2, GRIA3 and GRIA4) and 4 major auxiliary subunits arranged in a twofold symmetry. One of the two pairs of distinct binding sites is occupied either by CNIH2, CNIH3 or CACNG2, CACNG3. The other harbors CACNG2, CACNG3, CACNG4, CACNG8 or GSG1L. This inner core of AMPAR complex is complemented by outer core constituents binding directly to the GluA/GRIA proteins at sites distinct from the interaction sites of the inner core constituents. Outer core constituents include at least PRRT1, PRRT2, CKAMP44/SHISA9, FRRS1L and NRN1. The proteins of the inner and outer core serve as a platform for other, more peripherally associated AMPAR constituents, including CPT1C. Alone or in combination, these auxiliary subunits control the gating and pharmacology of the AMPAR complex and profoundly impact their biogenesis and protein processing. Interacts with SACM1L; the interaction regulates SACM1L phosphatidylinositol-3-phosphatase activity and translocation to endoplasmic reticulum/trans Golgi network in a malonyl-CoA dependent manner. Interacts with ATL1. Predominantly expressed in brain (at protein level) and testis, highly expressed in the hippocampus, amygdala and cerebellum. Expressed in neurons but not astrocytes. Expressed in the ventral horn from spinal cords.

It localises to the synapse. The protein resides in the cell projection. The protein localises to the axon. It is found in the dendrite. Its subcellular location is the dendritic spine. It localises to the endoplasmic reticulum membrane. It carries out the reaction S-hexadecanoyl-L-cysteinyl-[protein] + H2O = L-cysteinyl-[protein] + hexadecanoate + H(+). In terms of biological role, palmitoyl thioesterase specifically expressed in the endoplasmic reticulum of neurons. Modulates the trafficking of the glutamate receptor, AMPAR, to plasma membrane through depalmitoylation of GRIA1. Also regulates AMPR trafficking through the regulation of SACM1L phosphatidylinositol-3-phosphatase activity by interaction in a malonyl-CoA dependent manner. Binds malonyl-CoA and couples malonyl-CoA to ceramide levels, necessary for proper spine maturation and contributing to systemic energy homeostasis and appetite control. Binds to palmitoyl-CoA, but does not have carnitine palmitoyltransferase 1 catalytic activity or at very low levels. This is Palmitoyl thioesterase CPT1C (Cpt1c) from Mus musculus (Mouse).